Consider the following 127-residue polypeptide: Trefoil factor 2 (127 aa).

The N-terminal stretch at 1 to 21 (EPQRPAPGHPPPAGAVCLTGA) is a signal peptide. Gln22 bears the Pyrrolidone carboxylic acid mark. 2 P-type domains span residues 27–71 (CRCS…FKPL) and 77–120 (EECV…FFPM). 7 disulfide bridges follow: Cys27–Cys125, Cys29–Cys56, Cys40–Cys55, Cys50–Cys67, Cys79–Cys105, Cys89–Cys104, and Cys99–Cys116.

As to expression, found in pancreas.

It is found in the secreted. Functionally, inhibits gastrointestinal motility and gastric acid secretion. Could function as a structural component of gastric mucus, possibly by stabilizing glycoproteins in the mucus gel through interactions with carbohydrate side chains. The polypeptide is Trefoil factor 2 (TFF2) (Sus scrofa (Pig)).